Consider the following 623-residue polypeptide: MQDTNPSQPDSPITGYACIQDYLRNLSGAPGVYRMLDAQARVLYVGKARNLKARVSNYARPGHSPRIERMIRETASMMFLTTRTETEALLLEQNLIKQLKPKYNVLLRDDKSFPNILVAKDHSFAQIKKHRGAKKEKGTYFGPFASAGAVNRTLNQLQKAFLLRNCTDAVFESRTRPCLLYQIKRCSAPCVGLISDQDYAAAVKDAERFLSGRSTRVQEELAEQMMAASEAMEFERAAALRDRIRALTTVQGTQGINPRGVAEADVVALHLENGQACVQVFFIRANQNWGNRDFYPRVGEDVSAAEVMEAFLGQFYDNKEPPRQLILSDAIENADLMTEALSEKAGRKVELLVPQRGEKAELVSGALRNARESLARRMSESATQTKLLGGLAEAFDLDGPPQRIEVYDNSHIQGTNAVGGMIVAGPEGFLKNQYRKFNIRGDDLTPGDDFGMMKEVLTRRFTRLLKEDPDRDKGLWPDLLLIDGGAGQVSAVHEIMMAHGVQDIPMVGVAKGIDRDHGKEEFHRTGQRPFALKRNDPVLYFIQRLRDEAHRFAIGTHRAKRAKAVSATPLDDIPGVGAARKRALLAHFGSAKAVSRADLADLTAVEGVSAGLAQKIYDFFHES.

The 78-residue stretch at 28 to 105 folds into the GIY-YIG domain; that stretch reads GAPGVYRMLD…IKQLKPKYNV (78 aa). Residues 215–250 form the UVR domain; it reads TRVQEELAEQMMAASEAMEFERAAALRDRIRALTTV.

This sequence belongs to the UvrC family. In terms of assembly, interacts with UvrB in an incision complex.

The protein localises to the cytoplasm. Functionally, the UvrABC repair system catalyzes the recognition and processing of DNA lesions. UvrC both incises the 5' and 3' sides of the lesion. The N-terminal half is responsible for the 3' incision and the C-terminal half is responsible for the 5' incision. The protein is UvrABC system protein C of Ruegeria pomeroyi (strain ATCC 700808 / DSM 15171 / DSS-3) (Silicibacter pomeroyi).